The sequence spans 246 residues: YjeF N-terminal domain-containing 3 (246 aa).

Residues 24–234 form the YjeF N-terminal domain; sequence VATVETELLR…DIQKKYELNL (211 aa).

In terms of assembly, interacts with apoa1a. Binds to high-density lipoprotein.

Its function is as follows. Accelerates cholesterol efflux from endothelial cells to high-density lipoprotein (HDL) and thereby regulates angiogenesis. Orchestrates hematopoietic stem and progenitor cell emergence from the hemogenic endothelium, a type of specialized endothelium manifesting hematopoietic potential. YJEFN3-mediated cholesterol efflux activates endothelial SREBF2, the master transcription factor for cholesterol biosynthesis, which in turn transactivates NOTCH and promotes hematopoietic stem and progenitor cell emergence. This chain is YjeF N-terminal domain-containing 3, found in Danio rerio (Zebrafish).